Here is a 447-residue protein sequence, read N- to C-terminus: GTPase Der (447 aa).

EngA-type G domains follow at residues 3-167 (PVVA…HLED) and 180-353 (IKLA…KAAN). Residues 9–16 (GRPNVGKS), 56–60 (DTGGF), 119–122 (NKAE), 186–193 (GRPNVGKS), 233–237 (DTAGL), and 298–301 (NKWD) each bind GTP. In terms of domain architecture, KH-like spans 354-438 (CKMSTPILTR…PMRIEFKSST (85 aa)).

The protein belongs to the TRAFAC class TrmE-Era-EngA-EngB-Septin-like GTPase superfamily. EngA (Der) GTPase family. In terms of assembly, associates with the 50S ribosomal subunit.

GTPase that plays an essential role in the late steps of ribosome biogenesis. The chain is GTPase Der from Albidiferax ferrireducens (strain ATCC BAA-621 / DSM 15236 / T118) (Rhodoferax ferrireducens).